The sequence spans 245 residues: Uridylate kinase (245 aa).

14 to 17 (KLSG) lines the ATP pocket. Position 56 (G56) interacts with UMP. G57 and R61 together coordinate ATP. UMP is bound by residues D76 and 137–144 (TGLPFFTT). ATP contacts are provided by T164, Y170, and D173.

The protein belongs to the UMP kinase family. Homohexamer.

It localises to the cytoplasm. It catalyses the reaction UMP + ATP = UDP + ADP. It participates in pyrimidine metabolism; CTP biosynthesis via de novo pathway; UDP from UMP (UMPK route): step 1/1. Inhibited by UTP. Catalyzes the reversible phosphorylation of UMP to UDP. This chain is Uridylate kinase, found in Syntrophobacter fumaroxidans (strain DSM 10017 / MPOB).